The sequence spans 243 residues: 2-C-methyl-D-erythritol 4-phosphate cytidylyltransferase (243 aa).

The protein belongs to the IspD/TarI cytidylyltransferase family. IspD subfamily.

It catalyses the reaction 2-C-methyl-D-erythritol 4-phosphate + CTP + H(+) = 4-CDP-2-C-methyl-D-erythritol + diphosphate. Its pathway is isoprenoid biosynthesis; isopentenyl diphosphate biosynthesis via DXP pathway; isopentenyl diphosphate from 1-deoxy-D-xylulose 5-phosphate: step 2/6. Catalyzes the formation of 4-diphosphocytidyl-2-C-methyl-D-erythritol from CTP and 2-C-methyl-D-erythritol 4-phosphate (MEP). In Aeromonas hydrophila subsp. hydrophila (strain ATCC 7966 / DSM 30187 / BCRC 13018 / CCUG 14551 / JCM 1027 / KCTC 2358 / NCIMB 9240 / NCTC 8049), this protein is 2-C-methyl-D-erythritol 4-phosphate cytidylyltransferase.